An 87-amino-acid chain; its full sequence is Homeotic protein ultrabithorax (87 aa).

An Antp-type hexapeptide motif is present at residues 22 to 27 (FYPWMA).

Belongs to the Antp homeobox family. In terms of tissue distribution, in the embryo, expression is seen in the epidermis, somatic and visceral mesoderm, and the peripheral and central nervous system.

It localises to the nucleus. Its function is as follows. Sequence-specific transcription factor which is part of a developmental regulatory system that provides cells with specific positional identities on the anterior-posterior axis. Binds the consensus region 5'-TTAAT[GT][GA]-3'. This homeotic protein controls development of the cells in the posterior thoracic and first abdominal segments. It activates the synthesis of the decapentaplegic (DPP) growth factor. This is Homeotic protein ultrabithorax (Ubx) from Drosophila hydei (Fruit fly).